The chain runs to 208 residues: Putative ankyrin repeat protein Ta0196 (208 aa).

ANK repeat units follow at residues 49–78 (YQRN…HIDD), 82–111 (EGNT…SIDI), 115–144 (AGNT…NINI), and 148–177 (EGDT…DLNA).

The polypeptide is Putative ankyrin repeat protein Ta0196 (Thermoplasma acidophilum (strain ATCC 25905 / DSM 1728 / JCM 9062 / NBRC 15155 / AMRC-C165)).